The following is a 109-amino-acid chain: Sperm-specific class P protein 9/11 (109 aa).

The MSP domain occupies 2–109 (SLTADPPACT…TVTIPMSATA (108 aa)).

In terms of tissue distribution, expressed at higher level in testis.

This Caenorhabditis elegans protein is Sperm-specific class P protein 9/11 (ssp-9).